The chain runs to 101 residues: UPF0473 protein spr0177 (101 aa).

It belongs to the UPF0473 family.

In Streptococcus pneumoniae (strain ATCC BAA-255 / R6), this protein is UPF0473 protein spr0177.